Here is a 318-residue protein sequence, read N- to C-terminus: D-alanine--D-alanine ligase (318 aa).

One can recognise an ATP-grasp domain in the interval 116-311 (KQVWQSLGIP…FQQLVLAILA (196 aa)). ATP is bound at residue 142–197 (SAELGFPLIVKPAHEGSSIGMAKVNSEQELVAAWKDAAKYDSQVLVEQWIHGPEFT). Residues D265, E278, and N280 each coordinate Mg(2+).

It belongs to the D-alanine--D-alanine ligase family. Requires Mg(2+) as cofactor. It depends on Mn(2+) as a cofactor.

It localises to the cytoplasm. The enzyme catalyses 2 D-alanine + ATP = D-alanyl-D-alanine + ADP + phosphate + H(+). It participates in cell wall biogenesis; peptidoglycan biosynthesis. Cell wall formation. This is D-alanine--D-alanine ligase from Pseudomonas entomophila (strain L48).